The sequence spans 263 residues: Endonuclease 8 (263 aa).

P2 serves as the catalytic Schiff-base intermediate with DNA. E3 acts as the Proton donor in catalysis. The active-site Proton donor; for beta-elimination activity is the K53. Positions 70, 125, and 169 each coordinate DNA. The FPG-type zinc-finger motif lies at 229-263 (KVFHREGESCERCGGTIERTMLSSRPFYWCPHCQS). The active-site Proton donor; for delta-elimination activity is the R253.

This sequence belongs to the FPG family. Zn(2+) is required as a cofactor.

It carries out the reaction 2'-deoxyribonucleotide-(2'-deoxyribose 5'-phosphate)-2'-deoxyribonucleotide-DNA = a 3'-end 2'-deoxyribonucleotide-(2,3-dehydro-2,3-deoxyribose 5'-phosphate)-DNA + a 5'-end 5'-phospho-2'-deoxyribonucleoside-DNA + H(+). Functionally, involved in base excision repair of DNA damaged by oxidation or by mutagenic agents. Acts as a DNA glycosylase that recognizes and removes damaged bases. Has a preference for oxidized pyrimidines, such as thymine glycol, 5,6-dihydrouracil and 5,6-dihydrothymine. Has AP (apurinic/apyrimidinic) lyase activity and introduces nicks in the DNA strand. Cleaves the DNA backbone by beta-delta elimination to generate a single-strand break at the site of the removed base with both 3'- and 5'-phosphates. This chain is Endonuclease 8, found in Pectobacterium atrosepticum (strain SCRI 1043 / ATCC BAA-672) (Erwinia carotovora subsp. atroseptica).